A 299-amino-acid polypeptide reads, in one-letter code: 33 kDa chaperonin (299 aa).

2 cysteine pairs are disulfide-bonded: C238-C240 and C271-C274.

The protein belongs to the HSP33 family. Post-translationally, under oxidizing conditions two disulfide bonds are formed involving the reactive cysteines. Under reducing conditions zinc is bound to the reactive cysteines and the protein is inactive.

It localises to the cytoplasm. Its function is as follows. Redox regulated molecular chaperone. Protects both thermally unfolding and oxidatively damaged proteins from irreversible aggregation. Plays an important role in the bacterial defense system toward oxidative stress. The protein is 33 kDa chaperonin of Alkaliphilus oremlandii (strain OhILAs) (Clostridium oremlandii (strain OhILAs)).